The chain runs to 222 residues: Matrix protein (222 aa).

A PTAP/PSAP motif motif is present at residues Pro46 to Pro49.

Homomultimer. Interacts with viral nucleocapsid. Interacts with host TSG101.

It localises to the virion membrane. The protein localises to the host endomembrane system. It is found in the host nucleus membrane. In terms of biological role, plays a major role in assembly and budding of virion, by recruiting cellular partners of the ESCRT complexes that play a key role in releasing the budding particle from the host membrane. Condensates the ribonucleocapsid core during virus assembly. The polypeptide is Matrix protein (M) (Drosophila melanogaster (Fruit fly)).